Reading from the N-terminus, the 245-residue chain is 3-deoxy-manno-octulosonate cytidylyltransferase (245 aa).

Belongs to the KdsB family.

It is found in the cytoplasm. The catalysed reaction is 3-deoxy-alpha-D-manno-oct-2-ulosonate + CTP = CMP-3-deoxy-beta-D-manno-octulosonate + diphosphate. Its pathway is nucleotide-sugar biosynthesis; CMP-3-deoxy-D-manno-octulosonate biosynthesis; CMP-3-deoxy-D-manno-octulosonate from 3-deoxy-D-manno-octulosonate and CTP: step 1/1. The protein operates within bacterial outer membrane biogenesis; lipopolysaccharide biosynthesis. Its function is as follows. Activates KDO (a required 8-carbon sugar) for incorporation into bacterial lipopolysaccharide in Gram-negative bacteria. The sequence is that of 3-deoxy-manno-octulosonate cytidylyltransferase from Rhodopseudomonas palustris (strain ATCC BAA-98 / CGA009).